Here is a 38-residue protein sequence, read N- to C-terminus: Photosystem II reaction center protein X (38 aa).

Residues 9 to 29 (IASLFAGAFIALAIGGVLVFI) form a helical membrane-spanning segment.

Belongs to the PsbX family. Type 1 subfamily. As to quaternary structure, PSII is composed of 1 copy each of membrane proteins PsbA, PsbB, PsbC, PsbD, PsbE, PsbF, PsbH, PsbI, PsbJ, PsbK, PsbL, PsbM, PsbT, PsbX, PsbY, PsbZ, Psb30/Ycf12, at least 3 peripheral proteins of the oxygen-evolving complex and a large number of cofactors. It forms dimeric complexes.

It localises to the plastid. The protein localises to the chloroplast thylakoid membrane. Functionally, involved in the binding and/or turnover of quinones at the Q(B) site of photosystem II (PSII). PSII is a light-driven water plastoquinone oxidoreductase, using light energy to abstract electrons from H(2)O, generating a proton gradient subsequently used for ATP formation. This is Photosystem II reaction center protein X from Phaeodactylum tricornutum (strain CCAP 1055/1).